The sequence spans 546 residues: CTP synthase (546 aa).

Positions 1–269 are amidoligase domain; sequence MADTKYIFVT…DKVTLKKLAL (269 aa). Ser-15 is a CTP binding site. Position 15 (Ser-15) interacts with UTP. 16–21 contacts ATP; it reads SLGKGI. Position 56 (Tyr-56) interacts with L-glutamine. Residue Asp-73 participates in ATP binding. Positions 73 and 143 each coordinate Mg(2+). CTP contacts are provided by residues 150–152, 190–195, and Lys-226; these read DIE and KTKPTQ. UTP-binding positions include 190–195 and Lys-226; that span reads KTKPTQ. A Glutamine amidotransferase type-1 domain is found at 295-537; sequence HIGLIGKYVE…VKAAHEHSVK (243 aa). Residue Gly-357 participates in L-glutamine binding. Cys-384 (nucleophile; for glutamine hydrolysis) is an active-site residue. Residues 385–388, Glu-408, and Arg-465 each bind L-glutamine; that span reads LGMQ. Residues His-510 and Glu-512 contribute to the active site.

The protein belongs to the CTP synthase family. Homotetramer.

The catalysed reaction is UTP + L-glutamine + ATP + H2O = CTP + L-glutamate + ADP + phosphate + 2 H(+). It catalyses the reaction L-glutamine + H2O = L-glutamate + NH4(+). It carries out the reaction UTP + NH4(+) + ATP = CTP + ADP + phosphate + 2 H(+). It functions in the pathway pyrimidine metabolism; CTP biosynthesis via de novo pathway; CTP from UDP: step 2/2. With respect to regulation, allosterically activated by GTP, when glutamine is the substrate; GTP has no effect on the reaction when ammonia is the substrate. The allosteric effector GTP functions by stabilizing the protein conformation that binds the tetrahedral intermediate(s) formed during glutamine hydrolysis. Inhibited by the product CTP, via allosteric rather than competitive inhibition. In terms of biological role, catalyzes the ATP-dependent amination of UTP to CTP with either L-glutamine or ammonia as the source of nitrogen. Regulates intracellular CTP levels through interactions with the four ribonucleotide triphosphates. The sequence is that of CTP synthase from Christiangramia forsetii (strain DSM 17595 / CGMCC 1.15422 / KT0803) (Gramella forsetii).